A 465-amino-acid polypeptide reads, in one-letter code: UDP-N-acetylmuramate--L-alanine ligase (465 aa).

ATP is bound at residue 112 to 118 (GTHGKTT).

The protein belongs to the MurCDEF family.

Its subcellular location is the cytoplasm. It carries out the reaction UDP-N-acetyl-alpha-D-muramate + L-alanine + ATP = UDP-N-acetyl-alpha-D-muramoyl-L-alanine + ADP + phosphate + H(+). Its pathway is cell wall biogenesis; peptidoglycan biosynthesis. Functionally, cell wall formation. The protein is UDP-N-acetylmuramate--L-alanine ligase of Burkholderia orbicola (strain MC0-3).